The sequence spans 163 residues: Peptidyl-prolyl cis-trans isomerase (163 aa).

The PPIase cyclophilin-type domain occupies 5 to 162 (YFDVSSNGKP…SVLKIEDCGT (158 aa)).

The protein belongs to the cyclophilin-type PPIase family. PPIase A subfamily.

The protein resides in the cytoplasm. It catalyses the reaction [protein]-peptidylproline (omega=180) = [protein]-peptidylproline (omega=0). Its activity is regulated as follows. Binds cyclosporin A (CsA). CsA mediates some of its effects via an inhibitory action on PPIase. Functionally, PPIases accelerate the folding of proteins. It catalyzes the cis-trans isomerization of proline imidic peptide bonds in oligopeptides. This is Peptidyl-prolyl cis-trans isomerase (PIG28) from Uromyces fabae (Rust fungus).